A 672-amino-acid polypeptide reads, in one-letter code: Nuclear hormone receptor family member nhr-5 (672 aa).

Positions M1–V19 are enriched in low complexity. The interval M1–S38 is disordered. The segment at residues T40–P115 is a DNA-binding region (nuclear receptor). 2 consecutive NR C4-type zinc fingers follow at residues C43–C63 and C79–C98. Residues E155–F424 form the NR LBD domain. Residues N550–S577 form a disordered region. Residues S562–S577 show a composition bias toward low complexity.

It belongs to the nuclear hormone receptor family.

Its subcellular location is the nucleus. Its function is as follows. Orphan nuclear receptor. The sequence is that of Nuclear hormone receptor family member nhr-5 (nhr-5) from Caenorhabditis elegans.